A 375-amino-acid chain; its full sequence is MLNFKLLNTDGNARRGQLTVNHGVIETPIFMPVGTYGSVKAMSPLELKEIDAQIILGNTFHLWLRPGNDIVAKFGGLHEFMGWDKPILTDSGGFQVFSLGEMRKITEEGVHFSSPINGDKLFLSPEVSMQIQRVLNSDIVMQFDECTPYEIDGRPATADEAAKSMRMSLRWAKRSIDEFNREENPNALFGIVQGGMFEHLRDESLAGLEDINFHGVAIGGLSVGEPKEDMLRVLQHVGPRLPANKPHYLMGVGTPEDLVQGVANGIDMFDCVMPTRNARNGWLFTRFGDIKIKNARYKDDKKPLDASCGCYACRNFSRAYLHHLHRTGEILGARLNTIHNLHYYLDLMREMREAISEGRFQLFVKQFHADRARGA.

Residue aspartate 90 is the Proton acceptor of the active site. Substrate is bound by residues 90–94 (DSGGF), aspartate 144, glutamine 193, and glycine 220. The segment at 251-257 (GVGTPED) is RNA binding. Aspartate 270 acts as the Nucleophile in catalysis. Positions 275–279 (TRNAR) are RNA binding; important for wobble base 34 recognition. Positions 308, 310, 313, and 339 each coordinate Zn(2+).

This sequence belongs to the queuine tRNA-ribosyltransferase family. In terms of assembly, homodimer. Within each dimer, one monomer is responsible for RNA recognition and catalysis, while the other monomer binds to the replacement base PreQ1. Zn(2+) is required as a cofactor.

The catalysed reaction is 7-aminomethyl-7-carbaguanine + guanosine(34) in tRNA = 7-aminomethyl-7-carbaguanosine(34) in tRNA + guanine. The protein operates within tRNA modification; tRNA-queuosine biosynthesis. Catalyzes the base-exchange of a guanine (G) residue with the queuine precursor 7-aminomethyl-7-deazaguanine (PreQ1) at position 34 (anticodon wobble position) in tRNAs with GU(N) anticodons (tRNA-Asp, -Asn, -His and -Tyr). Catalysis occurs through a double-displacement mechanism. The nucleophile active site attacks the C1' of nucleotide 34 to detach the guanine base from the RNA, forming a covalent enzyme-RNA intermediate. The proton acceptor active site deprotonates the incoming PreQ1, allowing a nucleophilic attack on the C1' of the ribose to form the product. After dissociation, two additional enzymatic reactions on the tRNA convert PreQ1 to queuine (Q), resulting in the hypermodified nucleoside queuosine (7-(((4,5-cis-dihydroxy-2-cyclopenten-1-yl)amino)methyl)-7-deazaguanosine). The sequence is that of Queuine tRNA-ribosyltransferase from Herminiimonas arsenicoxydans.